The primary structure comprises 158 residues: Small ribosomal subunit protein uS7 (158 aa).

Belongs to the universal ribosomal protein uS7 family. As to quaternary structure, part of the 30S ribosomal subunit. Contacts proteins S9 and S11.

Its function is as follows. One of the primary rRNA binding proteins, it binds directly to 16S rRNA where it nucleates assembly of the head domain of the 30S subunit. Is located at the subunit interface close to the decoding center, probably blocks exit of the E-site tRNA. The sequence is that of Small ribosomal subunit protein uS7 from Bacteroides fragilis (strain YCH46).